Reading from the N-terminus, the 794-residue chain is Copper amine oxidase-like protein cao2 (794 aa).

Residues 307–318 and 391–396 contribute to the substrate site; these read AYDLGEYGVGYR and AANYEY. The active-site Proton acceptor is Asp-309. Tyr-394 (schiff-base intermediate with substrate; via topaquinone) is an active-site residue. 2',4',5'-topaquinone is present on Tyr-394. Cu cation contacts are provided by His-445 and His-447. The segment at 563-584 is disordered; it reads GDYAPQASDDTPKGLSKWISDD. Mn(2+) contacts are provided by Asp-593 and Ile-594. A Cu cation-binding site is contributed by His-604. The interval 634-748 is disordered; that stretch reads ALDTSSSVNS…NGGHHHHHHH (115 aa). Over residues 637-649 the composition is skewed to low complexity; the sequence is TSSSVNSTSEATS. The segment covering 652–714 has biased composition (basic and acidic residues); sequence THHENLRDTS…DAAQKHEGRS (63 aa). Positions 716–727 are enriched in polar residues; that stretch reads TLAQPGQQNANQ.

This sequence belongs to the copper/topaquinone oxidase family. As to quaternary structure, homodimer. Cu cation is required as a cofactor. The cofactor is Zn(2+). It depends on L-topaquinone as a cofactor. Requires Mn(2+) as cofactor. In terms of processing, topaquinone (TPQ) is generated by copper-dependent autoxidation of a specific tyrosyl residue.

It localises to the cytoplasm. It catalyses the reaction a primary methyl amine + O2 + H2O = an aldehyde + H2O2 + NH4(+). Functionally, copper amine oxidase-like protein that does not show any copper amine oxidase activity. May be the appropriate amine substrate for cao2 has not been identified yet. The polypeptide is Copper amine oxidase-like protein cao2 (cao2) (Schizosaccharomyces pombe (strain 972 / ATCC 24843) (Fission yeast)).